Reading from the N-terminus, the 158-residue chain is C-type lectin galactose-binding isoform (158 aa).

A signal peptide spans 1–20 (MGRFLLVTLSLLVVAFSLNG). Disulfide bonds link Cys-26/Cys-37, Cys-54/Cys-154, and Cys-129/Cys-146. Residues 33–155 (KNGYCYKVFK…CTALRPFLCQ (123 aa)) form the C-type lectin domain. Ca(2+) contacts are provided by Gln-119, Asp-121, Glu-127, Asn-142, and Asp-143. The Galactose-binding signature appears at 119–121 (QPD).

The protein belongs to the true venom lectin family. Homodimer; disulfide-linked. In terms of tissue distribution, expressed by the venom gland.

The protein localises to the secreted. In terms of biological role, galactose-binding lectin that binds to and agglutinates erythrocytes in a calcium-dependent manner. The protein is C-type lectin galactose-binding isoform of Hoplocephalus stephensii (Stephens's banded snake).